We begin with the raw amino-acid sequence, 273 residues long: Large ribosomal subunit protein uL2 (273 aa).

Disordered regions lie at residues 28 to 55 (TPEKSLTRGKPAKAGRGAGGRISVRHRG) and 222 to 273 (GMAM…SKRK). Basic residues predominate over residues 255 to 273 (YKTRKKRRVSDRFIVSKRK).

Belongs to the universal ribosomal protein uL2 family. In terms of assembly, part of the 50S ribosomal subunit. Forms a bridge to the 30S subunit in the 70S ribosome.

Its function is as follows. One of the primary rRNA binding proteins. Required for association of the 30S and 50S subunits to form the 70S ribosome, for tRNA binding and peptide bond formation. It has been suggested to have peptidyltransferase activity; this is somewhat controversial. Makes several contacts with the 16S rRNA in the 70S ribosome. This Treponema pallidum (strain Nichols) protein is Large ribosomal subunit protein uL2.